A 436-amino-acid chain; its full sequence is Probable protein phosphatase 2C 15 (436 aa).

Residues lysine 30–isoleucine 302 enclose the PPM-type phosphatase domain. Mn(2+) is bound by residues aspartate 78, glycine 79, aspartate 254, and aspartate 293.

It belongs to the PP2C family. Mg(2+) serves as cofactor. It depends on Mn(2+) as a cofactor.

It catalyses the reaction O-phospho-L-seryl-[protein] + H2O = L-seryl-[protein] + phosphate. The enzyme catalyses O-phospho-L-threonyl-[protein] + H2O = L-threonyl-[protein] + phosphate. The sequence is that of Probable protein phosphatase 2C 15 from Arabidopsis thaliana (Mouse-ear cress).